Consider the following 383-residue polypeptide: Dimethylsulfoniopropionate lyase 3 (383 aa).

This sequence belongs to the aspartate/glutamate racemases family. ALMA1 subfamily. Homotetramer.

The catalysed reaction is S,S-dimethyl-beta-propiothetin = acrylate + dimethyl sulfide + H(+). Mediates cleavage of dimethylsulfoniopropionate (DMSP) into dimethyl sulfide (DMS) and acrylate. DMS is the principal form by which sulfur is transported from oceans to the atmosphere and is a key component of the ocean sulfur cycle. The protein is Dimethylsulfoniopropionate lyase 3 of Emiliania huxleyi (strain CCMP1516).